Reading from the N-terminus, the 819-residue chain is Probable cadmium/zinc-transporting ATPase HMA1, chloroplastic (819 aa).

Residues 1–17 constitute a chloroplast transit peptide; the sequence is MEPATLTRSSSLTRFPY. Topologically, residues 18 to 122 are stromal; that stretch reads RRGLSTLRLA…IGWVRLANYL (105 aa). Over residues 66–79 the composition is skewed to basic and acidic residues; the sequence is DHHHDHHHDDEQDH. The segment at 66–87 is disordered; sequence DHHHDHHHDDEQDHHNHHHHHH. The helical transmembrane segment at 123–144 threads the bilayer; that stretch reads REHLHLCCSAAAMFLAAAVCPY. The Lumenal portion of the chain corresponds to 145-153; the sequence is LAPEPYIKS. The chain crosses the membrane as a helical span at residues 154–173; the sequence is LQNAFMIVGFPLVGVSASLD. At 174–180 the chain is on the stromal side; it reads ALMDIAG. Residues 181 to 201 form a helical membrane-spanning segment; that stretch reads GKVNIHVLMALAAFASVFMGN. A topological domain (lumenal) is located at residue Ala202. A helical membrane pass occupies residues 203–223; the sequence is LEGGLLLAMFNLAHIAEEFFT. Over 224–361 the chain is Stromal; that stretch reads SRSMVDVKEL…KPKLQRWLDE (138 aa). The chain crosses the membrane as a helical span at residues 362–384; the sequence is FGENYSKVVVVLSLAIAFLGPFL. Residues 385–398 lie on the Lumenal side of the membrane; sequence FKWPFLSTAACRGS. A helical transmembrane segment spans residues 399-416; sequence VYRALGLMVAASPCALAV. Topologically, residues 417-737 are stromal; that stretch reads APLAYATAIS…AKSRQTTSLV (321 aa). The active-site 4-aspartylphosphate intermediate is Asp453. Residues Glu682 and Asp686 each coordinate Mg(2+). A helical transmembrane segment spans residues 738–757; the sequence is KQNVALALTSIFLAALPSVL. At 758–762 the chain is on the lumenal side; it reads GFVPL. A helical membrane pass occupies residues 763 to 781; it reads WLTVLLHEGGTLLVCLNSV. Topologically, residues 782–819 are stromal; it reads RGLNDPSWSWKQDIVHLINKLRSQEPTSSSSNSLSSAH.

It belongs to the cation transport ATPase (P-type) (TC 3.A.3) family. Type IB subfamily.

The protein resides in the plastid. Its subcellular location is the chloroplast inner membrane. It catalyses the reaction Zn(2+)(in) + ATP + H2O = Zn(2+)(out) + ADP + phosphate + H(+). It carries out the reaction Cd(2+)(in) + ATP + H2O = Cd(2+)(out) + ADP + phosphate + H(+). In terms of biological role, involved in cadmium/zinc transport. This chain is Probable cadmium/zinc-transporting ATPase HMA1, chloroplastic (HMA1), found in Arabidopsis thaliana (Mouse-ear cress).